The following is a 1070-amino-acid chain: DNA-directed RNA polymerase subunit beta (1070 aa).

The protein belongs to the RNA polymerase beta chain family. In terms of assembly, in plastids the minimal PEP RNA polymerase catalytic core is composed of four subunits: alpha, beta, beta', and beta''. When a (nuclear-encoded) sigma factor is associated with the core the holoenzyme is formed, which can initiate transcription.

The protein resides in the plastid. It localises to the chloroplast. It catalyses the reaction RNA(n) + a ribonucleoside 5'-triphosphate = RNA(n+1) + diphosphate. Its function is as follows. DNA-dependent RNA polymerase catalyzes the transcription of DNA into RNA using the four ribonucleoside triphosphates as substrates. The polypeptide is DNA-directed RNA polymerase subunit beta (Angiopteris evecta (Mule's foot fern)).